The sequence spans 273 residues: Nitrogenase iron protein 2 (273 aa).

Residue 8–15 (GKGGIGKS) coordinates ATP. Cysteine 95 lines the [4Fe-4S] cluster pocket. An ADP-ribosylarginine; by dinitrogenase reductase ADP-ribosyltransferase modification is found at arginine 98. Cysteine 130 provides a ligand contact to [4Fe-4S] cluster.

The protein belongs to the NifH/BchL/ChlL family. As to quaternary structure, homodimer. Requires [4Fe-4S] cluster as cofactor. Post-translationally, the reversible ADP-ribosylation of Arg-98 inactivates the nitrogenase reductase and regulates nitrogenase activity.

The catalysed reaction is N2 + 8 reduced [2Fe-2S]-[ferredoxin] + 16 ATP + 16 H2O = H2 + 8 oxidized [2Fe-2S]-[ferredoxin] + 2 NH4(+) + 16 ADP + 16 phosphate + 6 H(+). Functionally, the key enzymatic reactions in nitrogen fixation are catalyzed by the nitrogenase complex, which has 2 components: the iron protein and the molybdenum-iron protein. This chain is Nitrogenase iron protein 2 (nifH2), found in Methanosarcina barkeri.